Here is a 389-residue protein sequence, read N- to C-terminus: ELAV-like protein 2 (389 aa).

3 RRM domains span residues 66-145 (TNLI…YARP), 153-233 (ANLY…FANN), and 306-384 (WCIF…FKTS).

This sequence belongs to the RRM elav family. As to quaternary structure, part of a ribonucleoprotein (RNP) complex, at least composed of elavl1/elrA and/or elavl2/elrB, igf2bp3/vg1RBP, ddx6/Xp54, ybx2/frgy2, lsm14b/rap55b and, in a subset of RNP complexes, stau1/staufen. Binds RNA as a homooligomer. As to expression, expressed in brain, testis and ovary. Ovarian expression is restricted to follicle cells surrounding the oocyte. From the early tailbud stage, expression is neural-specific and is seen in both the central and peripheral nervous system in differentiating neurons but not proliferating precursors. Expressed in the retina from stage 32 with expression becoming restricted to the ganglion cell layer by later stages.

It is found in the cytoplasm. The protein resides in the cell cortex. Functionally, binds to poly-U elements and AU-rich elements (AREs) in the 3'-UTR of target mRNAs. Required for the vegetal localization of vg1 mRNA. Probably required for nervous system development. This chain is ELAV-like protein 2 (elavl2), found in Xenopus laevis (African clawed frog).